The following is a 489-amino-acid chain: Protein-export membrane protein SecD (489 aa).

6 helical membrane-spanning segments follow: residues 17–37 (VLIV…IPPA), 328–348 (FIQI…AFMV), 356–376 (SIVV…LGIA), 384–404 (LASI…LVVI), 428–448 (LGII…LALM), and 450–470 (LSTL…GVIF).

Belongs to the SecD/SecF family. SecD subfamily. Part of the protein translocation apparatus. Forms a complex with SecF.

It localises to the cell membrane. Its function is as follows. Involved in protein export. This Methanolacinia petrolearia (strain DSM 11571 / OCM 486 / SEBR 4847) (Methanoplanus petrolearius) protein is Protein-export membrane protein SecD.